Reading from the N-terminus, the 211-residue chain is N-(5'-phosphoribosyl)anthranilate isomerase (211 aa).

This sequence belongs to the TrpF family.

It catalyses the reaction N-(5-phospho-beta-D-ribosyl)anthranilate = 1-(2-carboxyphenylamino)-1-deoxy-D-ribulose 5-phosphate. It functions in the pathway amino-acid biosynthesis; L-tryptophan biosynthesis; L-tryptophan from chorismate: step 3/5. The polypeptide is N-(5'-phosphoribosyl)anthranilate isomerase (Pseudomonas paraeruginosa (strain DSM 24068 / PA7) (Pseudomonas aeruginosa (strain PA7))).